The sequence spans 285 residues: MRLIIVSGRSGSGKSTALDVLEDNGFYCIDNLPAGLLPDLAERALLNTEMLLPQVAVSIDARNLQSHLRRFPELLEQVRQRNIRCDILYLDADDETLLKRFSETRRRHPLTDENRSLAEAIADETQVLAPIVDLADLKIDTTHLNLYQLRDSLKLRLLNQPEPGTAFLFESFGFKRGMPVDADLVFDARCLPNPYWKPELRDFSGLQQPVIDYLAAQPEVEEMYQDILAYLEKWLPRFAASNRAYVTIAIGCTGGHHRSVYLANRLSQALKKPLKNVQVRHRDLS.

8–15 (GRSGSGKS) contributes to the ATP binding site. Residue 60–63 (DARN) participates in GTP binding.

The protein belongs to the RapZ-like family.

Displays ATPase and GTPase activities. This chain is Nucleotide-binding protein Pmen_0867, found in Ectopseudomonas mendocina (strain ymp) (Pseudomonas mendocina).